Reading from the N-terminus, the 342-residue chain is NADH-ubiquinone oxidoreductase chain 2 (342 aa).

Transmembrane regions (helical) follow at residues 25 to 45 (TPWL…IPML), 58 to 78 (IKYF…ILII), 94 to 114 (MMIM…FWLP), 146 to 166 (MSSF…MGGL), 174 to 194 (ILAY…TISE), 195 to 215 (NTWE…IFMF), 238 to 258 (FMMM…GFLP), 274 to 294 (LVLL…RISF), and 316 to 336 (VVAL…TSNF).

The protein belongs to the complex I subunit 2 family.

Its subcellular location is the mitochondrion inner membrane. The enzyme catalyses a ubiquinone + NADH + 5 H(+)(in) = a ubiquinol + NAD(+) + 4 H(+)(out). In terms of biological role, core subunit of the mitochondrial membrane respiratory chain NADH dehydrogenase (Complex I) that is believed to belong to the minimal assembly required for catalysis. Complex I functions in the transfer of electrons from NADH to the respiratory chain. The immediate electron acceptor for the enzyme is believed to be ubiquinone. The protein is NADH-ubiquinone oxidoreductase chain 2 (ND2) of Locusta migratoria (Migratory locust).